The following is a 274-amino-acid chain: Non-homologous end joining protein Ku (274 aa).

In terms of domain architecture, Ku spans 11–195 (ITFGLVNVPV…KYKITPKELS (185 aa)).

This sequence belongs to the prokaryotic Ku family. In terms of assembly, homodimer. Interacts with LigD.

With LigD forms a non-homologous end joining (NHEJ) DNA repair enzyme, which repairs dsDNA breaks with reduced fidelity. Binds linear dsDNA with 5'- and 3'- overhangs but not closed circular dsDNA nor ssDNA. Recruits and stimulates the ligase activity of LigD. In Coxiella burnetii (strain RSA 331 / Henzerling II), this protein is Non-homologous end joining protein Ku.